The primary structure comprises 145 residues: D-aminoacyl-tRNA deacylase (145 aa).

Positions 137 to 138 (GP) match the Gly-cisPro motif, important for rejection of L-amino acids motif.

The protein belongs to the DTD family. In terms of assembly, homodimer.

It localises to the cytoplasm. It carries out the reaction glycyl-tRNA(Ala) + H2O = tRNA(Ala) + glycine + H(+). The enzyme catalyses a D-aminoacyl-tRNA + H2O = a tRNA + a D-alpha-amino acid + H(+). In terms of biological role, an aminoacyl-tRNA editing enzyme that deacylates mischarged D-aminoacyl-tRNAs. Also deacylates mischarged glycyl-tRNA(Ala), protecting cells against glycine mischarging by AlaRS. Acts via tRNA-based rather than protein-based catalysis; rejects L-amino acids rather than detecting D-amino acids in the active site. By recycling D-aminoacyl-tRNA to D-amino acids and free tRNA molecules, this enzyme counteracts the toxicity associated with the formation of D-aminoacyl-tRNA entities in vivo and helps enforce protein L-homochirality. This is D-aminoacyl-tRNA deacylase from Shewanella oneidensis (strain ATCC 700550 / JCM 31522 / CIP 106686 / LMG 19005 / NCIMB 14063 / MR-1).